The following is a 326-amino-acid chain: Holliday junction branch migration complex subunit RuvB (326 aa).

Residues 1–180 (MKSISCGKEY…FGIPLHLEFY (180 aa)) are large ATPase domain (RuvB-L). ATP is bound by residues Ile-19, Arg-20, Gly-61, Lys-64, Thr-65, Thr-66, 127 to 129 (EDF), Arg-170, Tyr-180, and Arg-217. Thr-65 provides a ligand contact to Mg(2+). Residues 181-251 (SFEELVNIIK…VADSVLLKLG (71 aa)) are small ATPAse domain (RuvB-S). The interval 254-326 (KMGLNKLDMN…QAKEYLSFQH (73 aa)) is head domain (RuvB-H). DNA contacts are provided by Arg-307 and Arg-312.

The protein belongs to the RuvB family. In terms of assembly, homohexamer. Forms an RuvA(8)-RuvB(12)-Holliday junction (HJ) complex. HJ DNA is sandwiched between 2 RuvA tetramers; dsDNA enters through RuvA and exits via RuvB. An RuvB hexamer assembles on each DNA strand where it exits the tetramer. Each RuvB hexamer is contacted by two RuvA subunits (via domain III) on 2 adjacent RuvB subunits; this complex drives branch migration. In the full resolvosome a probable DNA-RuvA(4)-RuvB(12)-RuvC(2) complex forms which resolves the HJ.

It is found in the cytoplasm. It carries out the reaction ATP + H2O = ADP + phosphate + H(+). The RuvA-RuvB-RuvC complex processes Holliday junction (HJ) DNA during genetic recombination and DNA repair, while the RuvA-RuvB complex plays an important role in the rescue of blocked DNA replication forks via replication fork reversal (RFR). RuvA specifically binds to HJ cruciform DNA, conferring on it an open structure. The RuvB hexamer acts as an ATP-dependent pump, pulling dsDNA into and through the RuvAB complex. RuvB forms 2 homohexamers on either side of HJ DNA bound by 1 or 2 RuvA tetramers; 4 subunits per hexamer contact DNA at a time. Coordinated motions by a converter formed by DNA-disengaged RuvB subunits stimulates ATP hydrolysis and nucleotide exchange. Immobilization of the converter enables RuvB to convert the ATP-contained energy into a lever motion, pulling 2 nucleotides of DNA out of the RuvA tetramer per ATP hydrolyzed, thus driving DNA branch migration. The RuvB motors rotate together with the DNA substrate, which together with the progressing nucleotide cycle form the mechanistic basis for DNA recombination by continuous HJ branch migration. Branch migration allows RuvC to scan DNA until it finds its consensus sequence, where it cleaves and resolves cruciform DNA. The sequence is that of Holliday junction branch migration complex subunit RuvB from Wolbachia pipientis wMel.